Consider the following 192-residue polypeptide: Ion-translocating oxidoreductase complex subunit B (192 aa).

The interval 1–26 is hydrophobic; the sequence is MNAFWIAVAAVSLLGLAFGAILGYAS. The region spanning 32–91 is the 4Fe-4S domain; the sequence is EDDPVVEKIDEILPQSQCGQCGYPGCRPYAEAISCNGEKINRCAPGGEAVMLKIAELLNV. 12 residues coordinate [4Fe-4S] cluster: Cys-49, Cys-52, Cys-57, Cys-74, Cys-117, Cys-120, Cys-123, Cys-127, Cys-147, Cys-150, Cys-153, and Cys-157. 2 consecutive 4Fe-4S ferredoxin-type domains span residues 108–137 and 138–167; these read MVAVIDENNCIGCTKCIQACPVDAIVGATR and AMHTVMSDLCTGCNLCVDPCPTHCISLQPV.

The protein belongs to the 4Fe4S bacterial-type ferredoxin family. RnfB subfamily. The complex is composed of six subunits: RsxA, RsxB, RsxC, RsxD, RsxE and RsxG. [4Fe-4S] cluster is required as a cofactor.

The protein resides in the cell inner membrane. Functionally, part of a membrane-bound complex that couples electron transfer with translocation of ions across the membrane. Required to maintain the reduced state of SoxR. The chain is Ion-translocating oxidoreductase complex subunit B from Escherichia coli O6:H1 (strain CFT073 / ATCC 700928 / UPEC).